The following is an 861-amino-acid chain: MTITVFATEYDPAHVIVNILCKNPSEHLIFPIIVKYKPSKNVYFCMQTQKCKFSKRIETVFVCDAESLNFSYYVKNALPIKSEDIIHCLNTEETENLYKDFLLSHVPEGSENIEFKSLVFFCKTIIIKHLTNKYLLPTSPFWFLSTYGQTEGMLLLTMYYYLFEEQKSTIATTKNYVQCFTDKLGDMVFTYSSMSEFINITLKSNYRKKFVSFSEYAKQKNIRDRKEFLYLDKQIDIFRNSVHLTNSFRVHYIYIAYSTALEKNKFIKYSQLTSYDPTRSDTSQCQENMYILGNSLHSDLISIMKQYFNEDSYFQNYVEIKRMLNNKFQMQQYVYDINSNRNIMLVINSDQISKMVNKCNKHGEGYFTPIKLGLQGFLKILASNKSILIDGKPVTRRQYLHDQFSNPIPMFRVQMSYKNLYCFGSAESWYKNMGFDQVMQFLPNEYISDESLTSTFWLQDTTFLSDEIEKQFYVTRHEIFNEYLPVTNYIGDLDLPLQDSAIITESLFFSMCKLMRNVLINAWQKIFPFIDKDAYPIFFFKTTCSNPENPLNHNVCYNEVETAFCVCKKKIGLRIAIPIPQGTAIIGSEPLKQLSKIFNHLMCLNHDLMQILNSVIFPGECFDTGIYNTGRCLRLGFMYKVDEENNRFLYGRLKPIFIVPEKMKKNFQDFVSMQLDLNNILHHGTKDQTITEIIYSIFDKACPTEFSFIDSRTKQLYHRKQSSLETLCLKYLHVNGFSETSCLSRDDLLMTFTRSIAWPQMLKKNIQHCEARTATQFQHVTFLKIDHKNIQLKKLQNGKLSDFSCLTRNHKGNRENVLVYLEFKVDNNRILIILWSKCFTTKCKSNSKQVHSSVVLDSLNM.

A CHC2-type zinc finger spans residues 805-843; sequence CLTRNHKGNRENVLVYLEFKVDNNRILIILWSKCFTTKC.

The protein belongs to the herpesviridae DNA primase family. As to quaternary structure, associates with the helicase and the primase-associated factor to form the helicase-primase factor.

It localises to the host nucleus. In terms of biological role, essential component of the helicase/primase complex. Unwinds the DNA at the replication forks and generates single-stranded DNA for both leading and lagging strand synthesis. The primase initiates primer synthesis and thereby produces large amount of short RNA primers on the lagging strand that the polymerase elongates using dNTPs. The sequence is that of DNA primase (U43) from Human herpesvirus 7 (strain JI) (HHV-7).